Consider the following 440-residue polypeptide: Chitinase-like protein Idgf2 (440 aa).

Residues 1–20 form the signal peptide; it reads MKAWIWFTFVACLFAASTEA. One can recognise a GH18 domain in the interval 22–440; the sequence is SNLVCYYDSS…PILRAIKYRL (419 aa). Cys26 and Cys53 form a disulfide bridge. An N-linked (GlcNAc...) asparagine glycan is attached at Asn220. The cysteines at positions 342 and 425 are disulfide-linked.

It belongs to the glycosyl hydrolase 18 family. IDGF subfamily. In terms of processing, glycosylated. Primarily expressed in yolk cells and fat body. In larvae, it is expressed in the imaginal ring and weakly expressed in imaginal disks. More strongly expressed than Idgf1 and Idgf3.

It localises to the secreted. In terms of biological role, cooperates with insulin-like peptides to stimulate the proliferation, polarization and motility of imaginal disk cells. May act by stabilizing the binding of insulin-like peptides to its receptor through a simultaneous interaction with both molecules to form a multiprotein signaling complex. The sequence is that of Chitinase-like protein Idgf2 (Idgf2) from Drosophila melanogaster (Fruit fly).